The primary structure comprises 510 residues: G-protein coupled receptor dmsr-1 (510 aa).

Residues 1–35 are Extracellular-facing; it reads MEFTECKTTFIHLPDKSFLYDVFVSVYNFYHPIHA. Residues 36-56 form a helical membrane-spanning segment; that stretch reads YLSIFLCVLGTIANFCNIVVL. Residues 57–64 are Cytoplasmic-facing; the sequence is TRRTMRTP. Residues 65 to 85 form a helical membrane-spanning segment; it reads VNMILTAMASCDTVVLFSNLI. Residues 86–107 are Extracellular-facing; it reads YTTHYSFVAFKFCHPKHWSYSW. A helical membrane pass occupies residues 108-128; the sequence is ALFLIAHAHLSLVAHSSSVWL. Residues 129 to 155 lie on the Cytoplasmic side of the membrane; the sequence is SVMLALVRYVTLRSRGNMGGMQVTLRH. Residues 156 to 176 traverse the membrane as a helical segment; the sequence is SYYAVAVTVSLVAVLNAPNFL. Topologically, residues 177–223 are extracellular; sequence NYKINEQPLNETCTDLDPMFWNSPAYLPGIADIAKANSCLVFRLSYW. N-linked (GlcNAc...) asparagine glycosylation is present at asparagine 186. Residues 224-244 traverse the membrane as a helical segment; the sequence is ISGMVFKVLPCALLSLFVWLL. Residues 245–307 lie on the Cytoplasmic side of the membrane; sequence LRILREVREN…GERVDRTTHM (63 aa). Residues 308-328 traverse the membrane as a helical segment; sequence LLAIVAVMLVTELPQGIMAVL. At 329–343 the chain is on the extracellular side; that stretch reads SGMCSEEFRIYIYNN. The chain crosses the membrane as a helical span at residues 344-364; that stretch reads LGDILDLFSLCGSCCSFIIYC. The Cytoplasmic segment spans residues 365 to 510; that stretch reads SMSGQFRNEF…DGIRGHFQNI (146 aa). Residues 452 to 510 are disordered; that stretch reads GCDSITPCSPMPTSFPSSPLPPIRSGEDESTDETSHLLNSSGPNSTASADGIRGHFQNI. Residues 487–499 are compositionally biased toward polar residues; the sequence is HLLNSSGPNSTAS.

This sequence belongs to the G-protein coupled receptor 1 family. As to expression, expressed in head neurons including the RID neuron and the paired AIY neurons, and in tail neurons including the paired PHA and PHB neurons. Not expressed in AVE and AVA neurons.

It is found in the cell membrane. G-protein coupled receptor. Its function is as follows. G-protein coupled receptor for flp-13 RFamide neuropeptides in vitro. Upon activation by flp-13 RFamide neuropeptides, promotes sleep in response to cellular stress also known as stress-induced sleep (SIS), probably by inhibiting the activity of wake-promoting neurons. This chain is G-protein coupled receptor dmsr-1, found in Caenorhabditis elegans.